The chain runs to 404 residues: uncharacterized protein (404 aa).

The protein belongs to the lymphocryptovirus BTRF1 family.

This is an uncharacterized protein from Homo sapiens (Human).